The sequence spans 253 residues: Probable transcriptional regulatory protein Krad_3057 (253 aa).

Belongs to the TACO1 family.

It is found in the cytoplasm. This chain is Probable transcriptional regulatory protein Krad_3057, found in Kineococcus radiotolerans (strain ATCC BAA-149 / DSM 14245 / SRS30216).